The following is a 328-amino-acid chain: DNA-directed RNA polymerase subunit alpha (328 aa).

Positions 1 to 234 (MVREKVKVST…DLFIPFLQAE (234 aa)) are alpha N-terminal domain (alpha-NTD). The interval 268 to 328 (IALKSIFIDQ…KQIMSILEKK (61 aa)) is alpha C-terminal domain (alpha-CTD).

Belongs to the RNA polymerase alpha chain family. In terms of assembly, in plastids the minimal PEP RNA polymerase catalytic core is composed of four subunits: alpha, beta, beta', and beta''. When a (nuclear-encoded) sigma factor is associated with the core the holoenzyme is formed, which can initiate transcription.

It localises to the plastid. The protein localises to the chloroplast. It catalyses the reaction RNA(n) + a ribonucleoside 5'-triphosphate = RNA(n+1) + diphosphate. Functionally, DNA-dependent RNA polymerase catalyzes the transcription of DNA into RNA using the four ribonucleoside triphosphates as substrates. In Citrus sinensis (Sweet orange), this protein is DNA-directed RNA polymerase subunit alpha.